Reading from the N-terminus, the 56-residue chain is Large ribosomal subunit protein bL32 (56 aa).

Positions 1 to 21 are disordered; that stretch reads MAVQQNRKTRSRRGMRRSHDA. Over residues 7-16 the composition is skewed to basic residues; the sequence is RKTRSRRGMR.

It belongs to the bacterial ribosomal protein bL32 family.

This chain is Large ribosomal subunit protein bL32, found in Vibrio cholerae serotype O1 (strain ATCC 39541 / Classical Ogawa 395 / O395).